A 525-amino-acid polypeptide reads, in one-letter code: MPEKRVLGIEGTAWNFSAAVFAEDLVCLHSAPYVPPTGGIHPREAAQHHASVASDVIRKALDEAGEKIDAVAFSIGPGLGPSLRIAATTARTLALKLGVPLIGVNHCVAHVEIGRWYTKFADPIVLYASGANTQVLGFLNGKYRIFGETLDIGLGNALDKFARSHNLPHPGGPIIEKMAKDGSYIHLPYTVKGMDLAFSGLMSAAKEATQRGESMEDVCFSFQETAFAMCVEVTERALAHTGKDEVILVGGVGANARLQEMLAKMCEERGAKFMAPPRVYMGDNGAMIAYTGKIMLEAGSTIPIAESVVNPGFRSDQVEVTWRHDAGQLFAPGQSETAERGAEASVNLTDKDVVKTRLAKGYRVPELDRHLIAERTRAEARAISAARRGGVPVPVIRDVTDHEIVMEKLDGDVLKYVMNEEYAKGAGLTVGKLHKAGITHGDLTTSNMIWHNDRVYLIDFGLSQMTEEIEPRGVDLHVLFQTLESTTENPETLKSAFINGYCAAFSEAENVIRREHEIELRGRYL.

The kae1 stretch occupies residues 1–322 (MPEKRVLGIE…FRSDQVEVTW (322 aa)). Fe cation-binding residues include His-106, His-110, and Tyr-127. L-threonylcarbamoyladenylate is bound by residues 127 to 131 (YASGA), Asp-159, Gly-172, Glu-176, and Asn-255. Fe cation is bound at residue Asp-283. One can recognise a Protein kinase domain in the interval 331–525 (APGQSETAER…HEIELRGRYL (195 aa)). ATP is bound by residues 338–346 (AERGAEASV) and Lys-355. Residue Asp-442 is the Proton acceptor; for kinase activity of the active site.

In the N-terminal section; belongs to the KAE1 / TsaD family. It in the C-terminal section; belongs to the protein kinase superfamily. Tyr protein kinase family. BUD32 subfamily. Component of the KEOPS complex that consists of Kae1, Bud32, Cgi121 and Pcc1; the whole complex dimerizes. The cofactor is Fe(2+).

The protein resides in the cytoplasm. It carries out the reaction L-seryl-[protein] + ATP = O-phospho-L-seryl-[protein] + ADP + H(+). The catalysed reaction is L-threonyl-[protein] + ATP = O-phospho-L-threonyl-[protein] + ADP + H(+). It catalyses the reaction L-threonylcarbamoyladenylate + adenosine(37) in tRNA = N(6)-L-threonylcarbamoyladenosine(37) in tRNA + AMP + H(+). Required for the formation of a threonylcarbamoyl group on adenosine at position 37 (t(6)A37) in tRNAs that read codons beginning with adenine. Is a component of the KEOPS complex that is probably involved in the transfer of the threonylcarbamoyl moiety of threonylcarbamoyl-AMP (TC-AMP) to the N6 group of A37. The Kae1 domain likely plays a direct catalytic role in this reaction. The Bud32 domain probably displays kinase activity that regulates Kae1 function. This chain is Probable bifunctional tRNA threonylcarbamoyladenosine biosynthesis protein, found in Methanocorpusculum labreanum (strain ATCC 43576 / DSM 4855 / Z).